The primary structure comprises 198 residues: Nucleoid occlusion factor SlmA (198 aa).

The HTH tetR-type domain occupies 9-70 (RNRREEILQA…SLIEFIEDSL (62 aa)). Residues 33–52 (TTAKLAANVGVSEAALYRHF) constitute a DNA-binding region (H-T-H motif). Residues 113-144 (ALMFEQDRLQDRINQLFERIESQLRQVLREHK) adopt a coiled-coil conformation.

This sequence belongs to the nucleoid occlusion factor SlmA family. In terms of assembly, homodimer. Interacts with FtsZ.

Its subcellular location is the cytoplasm. The protein localises to the nucleoid. Required for nucleoid occlusion (NO) phenomenon, which prevents Z-ring formation and cell division over the nucleoid. Acts as a DNA-associated cell division inhibitor that binds simultaneously chromosomal DNA and FtsZ, and disrupts the assembly of FtsZ polymers. SlmA-DNA-binding sequences (SBS) are dispersed on non-Ter regions of the chromosome, preventing FtsZ polymerization at these regions. The polypeptide is Nucleoid occlusion factor SlmA (Pectobacterium carotovorum subsp. carotovorum (strain PC1)).